Here is a 439-residue protein sequence, read N- to C-terminus: Acyl-coenzyme A thioesterase 9, mitochondrial (439 aa).

The transit peptide at 1 to 21 directs the protein to the mitochondrion; the sequence is MRRAALRLCALGKGQLTPGRG. HotDog ACOT-type domains lie at 84-209 and 289-401; these read KDSY…RDSE and ENSK…EKEV. Lys-103 is subject to N6-acetyllysine.

Belongs to the acyl coenzyme A hydrolase family. Interacts with NYAP1, NYAP2 and MYO16.

The protein resides in the mitochondrion. It is found in the mitochondrion matrix. The protein localises to the mitochondrion inner membrane. The enzyme catalyses butanoyl-CoA + H2O = butanoate + CoA + H(+). It catalyses the reaction propanoyl-CoA + H2O = propanoate + CoA + H(+). It carries out the reaction hexadecanoyl-CoA + H2O = hexadecanoate + CoA + H(+). The catalysed reaction is octanoyl-CoA + H2O = octanoate + CoA + H(+). The enzyme catalyses decanoyl-CoA + H2O = decanoate + CoA + H(+). It catalyses the reaction tetradecanoyl-CoA + H2O = tetradecanoate + CoA + H(+). It carries out the reaction 4,8-dimethylnonanoyl-CoA + H2O = 4,8-dimethylnonanoate + CoA + H(+). The catalysed reaction is 3-methylbutanoyl-CoA + H2O = 3-methylbutanoate + CoA + H(+). The enzyme catalyses 2-methylpropanoyl-CoA + H2O = 2-methylpropanoate + CoA + H(+). It functions in the pathway lipid metabolism; fatty acid metabolism. Its activity is regulated as follows. Strongly inhibited by NADH and CoA. Functionally, mitochondrial acyl-CoA thioesterase. Catalyzes the hydrolysis of acyl-CoAs into free fatty acids and coenzyme A (CoA), regulating their respective intracellular levels. Regulates both mitochondrial lipid and amino acid metabolism. The protein is Acyl-coenzyme A thioesterase 9, mitochondrial of Homo sapiens (Human).